Here is a 151-residue protein sequence, read N- to C-terminus: uncharacterized protein (151 aa).

The N-acetyltransferase domain occupies 3 to 151; that stretch reads IKIDDLTGRQ…PNSVFMTKKL (149 aa).

This sequence belongs to the acetyltransferase family.

This is an uncharacterized protein from Bacillus subtilis (strain 168).